A 242-amino-acid chain; its full sequence is ATP-dependent dethiobiotin synthetase BioD 1 (242 aa).

Residue 12 to 17 coordinates ATP; that stretch reads NVGKTT. Thr-16 is a binding site for Mg(2+). Residue Lys-37 is part of the active site. An ATP-binding site is contributed by Asp-66. Mg(2+)-binding residues include Asp-66 and Glu-124. Residues 184-185, 213-215, and Glu-220 each bind ATP; these read NR and PYL.

This sequence belongs to the dethiobiotin synthetase family. As to quaternary structure, homodimer. The cofactor is Mg(2+).

It localises to the cytoplasm. It catalyses the reaction (7R,8S)-7,8-diammoniononanoate + CO2 + ATP = (4R,5S)-dethiobiotin + ADP + phosphate + 3 H(+). Its pathway is cofactor biosynthesis; biotin biosynthesis; biotin from 7,8-diaminononanoate: step 1/2. Functionally, catalyzes a mechanistically unusual reaction, the ATP-dependent insertion of CO2 between the N7 and N8 nitrogen atoms of 7,8-diaminopelargonic acid (DAPA, also called 7,8-diammoniononanoate) to form a ureido ring. This is ATP-dependent dethiobiotin synthetase BioD 1 from Haemophilus influenzae (strain ATCC 51907 / DSM 11121 / KW20 / Rd).